A 477-amino-acid chain; its full sequence is Protoporphyrinogen oxidase (477 aa).

FAD contacts are provided by residues 9-14 (GGGISG), tryptophan 42, 57-60 (GPRG), valine 257, alanine 449, and 454-456 (VAV).

It belongs to the protoporphyrinogen/coproporphyrinogen oxidase family. Protoporphyrinogen oxidase subfamily. As to quaternary structure, monomer. Homodimer. FAD is required as a cofactor.

It is found in the mitochondrion inner membrane. It carries out the reaction protoporphyrinogen IX + 3 O2 = protoporphyrin IX + 3 H2O2. It functions in the pathway porphyrin-containing compound metabolism; protoporphyrin-IX biosynthesis; protoporphyrin-IX from protoporphyrinogen-IX: step 1/1. Functionally, catalyzes the 6-electron oxidation of protoporphyrinogen-IX to form protoporphyrin-IX. The sequence is that of Protoporphyrinogen oxidase (PPOX) from Macaca fascicularis (Crab-eating macaque).